We begin with the raw amino-acid sequence, 431 residues long: MSTAKLGCPKLRIMPLSIPSFPLPDARGRYGRFGGRYVPETLIPALDELEQAYEAAKQDPEFLDELDRLLREFVGRPNSLYLAERLTEHAGGAKIYLKREDQNFTGAHKINNCLAQALLAKRMGKQKIIAETGAGQHGVASATAAALLGLSCVVYMGEEDMRRQSLNVFRMQLLGAEVRPVTSGTATLKDATNEAIREWVTNVRDTFYILGSVVGPHPYPAMVRDFQSVIGEEVKVQLQEKEGRSVPDAIVACVGGGSNAIGIFAPFAYLPEGERPRLIGTEAAGHGVDTGMHAASVAWGRVGVLHGSMMYLMNDDEGQIVPPHSISAGLDYPGIGPEHCYYSVMGMAEYVPVTDAQALEGLQLLTRLEGIIPALESAHAISYAVQLARQMKPEEIVVVNLSGRGDKDVTEVMRLLEQSENKQAEGQEVKA.

Lys109 is modified (N6-(pyridoxal phosphate)lysine).

This sequence belongs to the TrpB family. Tetramer of two alpha and two beta chains. The cofactor is pyridoxal 5'-phosphate.

It catalyses the reaction (1S,2R)-1-C-(indol-3-yl)glycerol 3-phosphate + L-serine = D-glyceraldehyde 3-phosphate + L-tryptophan + H2O. It functions in the pathway amino-acid biosynthesis; L-tryptophan biosynthesis; L-tryptophan from chorismate: step 5/5. The beta subunit is responsible for the synthesis of L-tryptophan from indole and L-serine. This Deinococcus radiodurans (strain ATCC 13939 / DSM 20539 / JCM 16871 / CCUG 27074 / LMG 4051 / NBRC 15346 / NCIMB 9279 / VKM B-1422 / R1) protein is Tryptophan synthase beta chain.